Here is a 248-residue protein sequence, read N- to C-terminus: 5'-nucleotidase SurE (248 aa).

4 residues coordinate a divalent metal cation: Asp-8, Asp-9, Ser-39, and Asn-91.

This sequence belongs to the SurE nucleotidase family. A divalent metal cation is required as a cofactor.

Its subcellular location is the cytoplasm. The enzyme catalyses a ribonucleoside 5'-phosphate + H2O = a ribonucleoside + phosphate. Its function is as follows. Nucleotidase that shows phosphatase activity on nucleoside 5'-monophosphates. The protein is 5'-nucleotidase SurE of Geotalea daltonii (strain DSM 22248 / JCM 15807 / FRC-32) (Geobacter daltonii).